A 343-amino-acid chain; its full sequence is Phosphate acyltransferase (343 aa).

This sequence belongs to the PlsX family. Homodimer. Probably interacts with PlsY.

The protein localises to the cytoplasm. The catalysed reaction is a fatty acyl-[ACP] + phosphate = an acyl phosphate + holo-[ACP]. The protein operates within lipid metabolism; phospholipid metabolism. Catalyzes the reversible formation of acyl-phosphate (acyl-PO(4)) from acyl-[acyl-carrier-protein] (acyl-ACP). This enzyme utilizes acyl-ACP as fatty acyl donor, but not acyl-CoA. This chain is Phosphate acyltransferase, found in Coxiella burnetii (strain CbuG_Q212) (Coxiella burnetii (strain Q212)).